The following is a 60-amino-acid chain: Metallothionein-like protein EMB30 (60 aa).

The protein belongs to the metallothionein superfamily. Type 15 family.

Its function is as follows. Metallothioneins have a high content of cysteine residues that bind various heavy metals. This is Metallothionein-like protein EMB30 (EMB30) from Picea glauca (White spruce).